A 278-amino-acid chain; its full sequence is Dermonecrotic toxin LlSicTox-alphaIII3ii (278 aa).

Histidine 5 is a catalytic residue. Mg(2+) is bound by residues glutamate 25 and aspartate 27. Residue histidine 40 is the Nucleophile of the active site. A disulfide bond links cysteine 44 and cysteine 50. Aspartate 84 serves as a coordination point for Mg(2+).

This sequence belongs to the arthropod phospholipase D family. Class I subfamily. Requires Mg(2+) as cofactor. As to expression, expressed by the venom gland.

The protein localises to the secreted. It catalyses the reaction an N-(acyl)-sphingosylphosphocholine = an N-(acyl)-sphingosyl-1,3-cyclic phosphate + choline. It carries out the reaction an N-(acyl)-sphingosylphosphoethanolamine = an N-(acyl)-sphingosyl-1,3-cyclic phosphate + ethanolamine. The enzyme catalyses a 1-acyl-sn-glycero-3-phosphocholine = a 1-acyl-sn-glycero-2,3-cyclic phosphate + choline. The catalysed reaction is a 1-acyl-sn-glycero-3-phosphoethanolamine = a 1-acyl-sn-glycero-2,3-cyclic phosphate + ethanolamine. In terms of biological role, dermonecrotic toxins cleave the phosphodiester linkage between the phosphate and headgroup of certain phospholipids (sphingolipid and lysolipid substrates), forming an alcohol (often choline) and a cyclic phosphate. This toxin acts on sphingomyelin (SM). It may also act on ceramide phosphoethanolamine (CPE), lysophosphatidylcholine (LPC) and lysophosphatidylethanolamine (LPE), but not on lysophosphatidylserine (LPS), and lysophosphatidylglycerol (LPG). It acts by transphosphatidylation, releasing exclusively cyclic phosphate products as second products. Induces dermonecrosis, hemolysis, increased vascular permeability, edema, inflammatory response, and platelet aggregation. The chain is Dermonecrotic toxin LlSicTox-alphaIII3ii from Loxosceles laeta (South American recluse spider).